A 45-amino-acid polypeptide reads, in one-letter code: Putative metallothionein-like protein 1B (45 aa).

It belongs to the metallothionein superfamily. Type 15 family.

Functionally, metallothioneins have a high content of cysteine residues that bind various heavy metals. Confers tolerance to cadmium (Cd) and plays a role in Cd and zinc (Zn) homeostasis. The sequence is that of Putative metallothionein-like protein 1B (MT1B) from Arabidopsis thaliana (Mouse-ear cress).